Here is a 221-residue protein sequence, read N- to C-terminus: uncharacterized protein (221 aa).

A disordered region spans residues 1–30 (MVPPNPAHQPARRTQPQLQPQSQPRAQPLP). Over residues 12–25 (RRTQPQLQPQSQPR) the composition is skewed to polar residues. Residues 37-57 (VLCIIVALVLLGLLVGLAILI) traverse the membrane as a helical segment.

Its subcellular location is the membrane. This is an uncharacterized protein from Arabidopsis thaliana (Mouse-ear cress).